Here is a 128-residue protein sequence, read N- to C-terminus: MAPVKKLVAKGGKKKKQVLKFTLDCTHPVEDGIMDAANFEQFLQERIKVNGKAGNLGGGVVTIERSKSKITVTSEVPFSKRYLKYLTKKYLKKNNLRDWLRVVANSKESYELRYFQINQDEEEEEDED.

Residue threonine 62 is modified to Phosphothreonine. Phosphoserine is present on serine 66. Residue lysine 69 is modified to N6-succinyllysine.

Belongs to the eukaryotic ribosomal protein eL22 family. As to quaternary structure, component of the large ribosomal subunit.

It is found in the cytoplasm. Its function is as follows. Component of the large ribosomal subunit. The ribosome is a large ribonucleoprotein complex responsible for the synthesis of proteins in the cell. This is Large ribosomal subunit protein eL22 (RPL22) from Sus scrofa (Pig).